The chain runs to 403 residues: Dual-specificity RNA methyltransferase RlmN (403 aa).

A disordered region spans residues 1–25 (MTKIPMQPADSTPATFHPNAPTKTN). Glu112 functions as the Proton acceptor in the catalytic mechanism. A Radical SAM core domain is found at 123-364 (VNGRKTLCIS…VCTIRQTRGD (242 aa)). A disulfide bridge links Cys130 with Cys370. Cys137, Cys141, and Cys144 together coordinate [4Fe-4S] cluster. S-adenosyl-L-methionine contacts are provided by residues 193 to 194 (GE), Ser225, 247 to 249 (SLH), and Asn327. Residue Cys370 is the S-methylcysteine intermediate of the active site.

It belongs to the radical SAM superfamily. RlmN family. [4Fe-4S] cluster is required as a cofactor.

It localises to the cytoplasm. It catalyses the reaction adenosine(2503) in 23S rRNA + 2 reduced [2Fe-2S]-[ferredoxin] + 2 S-adenosyl-L-methionine = 2-methyladenosine(2503) in 23S rRNA + 5'-deoxyadenosine + L-methionine + 2 oxidized [2Fe-2S]-[ferredoxin] + S-adenosyl-L-homocysteine. It carries out the reaction adenosine(37) in tRNA + 2 reduced [2Fe-2S]-[ferredoxin] + 2 S-adenosyl-L-methionine = 2-methyladenosine(37) in tRNA + 5'-deoxyadenosine + L-methionine + 2 oxidized [2Fe-2S]-[ferredoxin] + S-adenosyl-L-homocysteine. In terms of biological role, specifically methylates position 2 of adenine 2503 in 23S rRNA and position 2 of adenine 37 in tRNAs. m2A2503 modification seems to play a crucial role in the proofreading step occurring at the peptidyl transferase center and thus would serve to optimize ribosomal fidelity. This chain is Dual-specificity RNA methyltransferase RlmN, found in Psychrobacter sp. (strain PRwf-1).